The sequence spans 481 residues: Multiple inositol polyphosphate phosphatase 1 (481 aa).

Residues 1–30 (MLRGARSHLPASVAPAAVLAAALLSSFARC) form the signal peptide. The active site involves His-89. Asn-236 and Asn-475 each carry an N-linked (GlcNAc...) asparagine glycan. Residues 478–481 (SDEL) carry the Prevents secretion from ER motif.

The protein belongs to the histidine acid phosphatase family. MINPP1 subfamily. In terms of processing, N-glycosylated. As to expression, widely expressed with highest levels in kidney, intestine, thymus and liver.

The protein localises to the endoplasmic reticulum lumen. Its subcellular location is the secreted. The protein resides in the cell membrane. The catalysed reaction is 1D-myo-inositol hexakisphosphate + H2O = 1D-myo-inositol 1,2,4,5,6-pentakisphosphate + phosphate. It catalyses the reaction 1D-myo-inositol 1,2,4,5,6-pentakisphosphate + H2O = 1D-myo-inositol 1,2,5,6-tetrakisphosphate + phosphate. The enzyme catalyses 1D-myo-inositol 1,2,5,6-tetrakisphosphate + H2O = 1D-myo-inositol 1,2,6-trisphosphate + phosphate. It carries out the reaction 1D-myo-inositol 1,2,6-trisphosphate + H2O = 1D-myo-inositol 1,2-bisphosphate + phosphate. The catalysed reaction is 1D-myo-inositol 1,2-bisphosphate + H2O = 1D-myo-inositol 2-phosphate + phosphate. It catalyses the reaction 1D-myo-inositol hexakisphosphate + H2O = 1D-myo-inositol 1,2,3,5,6-pentakisphosphate + phosphate. The enzyme catalyses 1D-myo-inositol 1,2,3,5,6-pentakisphosphate + H2O = 1D-myo-inositol 1,2,3,6-tetrakisphosphate + phosphate. It carries out the reaction 1D-myo-inositol 1,2,3,6-tetrakisphosphate + H2O = 1D-myo-inositol 1,2,3-trisphosphate + phosphate. The catalysed reaction is 1D-myo-inositol 1,2,3-trisphosphate + H2O = 1D-myo-inositol 2,3-bisphosphate + phosphate. It catalyses the reaction 1D-myo-inositol 2,3-bisphosphate + H2O = 1D-myo-inositol 2-phosphate + phosphate. The enzyme catalyses 1D-myo-inositol 1,3,4,5,6-pentakisphosphate + H2O = 1D-myo-inositol 1,4,5,6-tetrakisphosphate + phosphate. It carries out the reaction 1D-myo-inositol 1,4,5,6-tetrakisphosphate + H2O = 1D-myo-inositol 1,4,5-trisphosphate + phosphate. The catalysed reaction is (2R)-2,3-bisphosphoglycerate + H2O = (2R)-2-phosphoglycerate + phosphate. Its function is as follows. Multiple inositol polyphosphate phosphatase that hydrolyzes 1D-myo-inositol 1,3,4,5,6-pentakisphosphate (InsP5[2OH]) and 1D-myo-inositol hexakisphosphate (InsP6) to a range of less phosphorylated inositol phosphates. This regulates the availability of these various small molecule second messengers and metal chelators which control many aspects of cell physiology. Has a weak in vitro activity towards 1D-myo-inositol 1,4,5-trisphosphate which is unlikely to be physiologically relevant. By regulating intracellular inositol polyphosphates pools, which act as metal chelators, it may control the availability of intracellular calcium and iron, which are important for proper neuronal development and homeostasis. May have a dual substrate specificity, and function as a 2,3-bisphosphoglycerate 3-phosphatase hydrolyzing 2,3-bisphosphoglycerate to 2-phosphoglycerate. 2,3-bisphosphoglycerate (BPG) is formed as part of the Rapoport-Luebering glycolytic bypass and is a regulator of systemic oxygen homeostasis as the major allosteric effector of hemoglobin. This Mus musculus (Mouse) protein is Multiple inositol polyphosphate phosphatase 1.